The chain runs to 608 residues: Threonine--tRNA ligase (608 aa).

Residues 1 to 143 (MRVLYIHAER…VFKPEEAKTE (143 aa)) are editing domain. Catalytic stretches follow at residues 194–490 (PKYL…PRLP) and 195–490 (KYLD…PRLP). Zn(2+)-binding residues include cysteine 287, histidine 338, and histidine 459.

This sequence belongs to the class-II aminoacyl-tRNA synthetase family. Homodimer. Requires Zn(2+) as cofactor.

The protein resides in the cytoplasm. It carries out the reaction tRNA(Thr) + L-threonine + ATP = L-threonyl-tRNA(Thr) + AMP + diphosphate + H(+). Functionally, catalyzes the attachment of threonine to tRNA(Thr) in a two-step reaction: L-threonine is first activated by ATP to form Thr-AMP and then transferred to the acceptor end of tRNA(Thr). Also edits incorrectly charged L-seryl-tRNA(Thr). The polypeptide is Threonine--tRNA ligase (Pyrobaculum arsenaticum (strain DSM 13514 / JCM 11321 / PZ6)).